The primary structure comprises 1486 residues: Rap guanine nucleotide exchange factor 2 (1486 aa).

2 disordered regions span residues 40–59 (HVSS…SSSL) and 68–101 (SEAG…SDPL). Positions 83 to 94 (VDSEDDDDEEDI) are enriched in acidic residues. 135–252 (AFANMTMSVR…QKVEEEGEIV (118 aa)) contributes to the a nucleoside 3',5'-cyclic phosphate binding site. The 114-residue stretch at 267–380 (KGHIVIKGTS…RLLNIACAAK (114 aa)) folds into the N-terminal Ras-GEF domain. Positions 385–468 (LMTLTKPARE…LSITVKTNLF (84 aa)) constitute a PDZ domain. Position 501 is a phosphoserine (S501). The region spanning 606-692 (PDQVLRVFKA…GRYYLKNNME (87 aa)) is the Ras-associating domain. T644 is subject to Phosphothreonine. In terms of domain architecture, Ras-GEF spans 717–944 (STVEVATQLS…SQGSTNATVL (228 aa)). Phosphoserine is present on residues S806, S930, S933, and S1022. Residues 1002–1049 (PATNTLPKNPTDKKPVKSETSPVAPRAGLQPKAQPQPQPPQPPHKLNQ) form a disordered region. Pro residues predominate over residues 1035–1044 (QPQPQPPQPP). Phosphoserine is present on residues S1077, S1086, S1092, S1113, S1117, S1156, and S1173. Disordered stretches follow at residues 1090 to 1176 (EGSL…SVSI), 1221 to 1254 (PSTE…SGSH), 1303 to 1357 (KYSR…DSSS), and 1391 to 1486 (GRYR…VSAV). 2 stretches are compositionally biased toward low complexity: residues 1105-1122 (SNTS…QSSP) and 1138-1159 (SDSG…SFDS). 2 stretches are compositionally biased toward polar residues: residues 1244-1254 (GSWTSCSSGSH) and 1304-1328 (YSRQ…SSTG). Over residues 1475 to 1486 (AEEDEDEQVSAV) the composition is skewed to acidic residues.

It belongs to the RAPGEF2 family. As to quaternary structure, found in a complex, at least composed of KIDINS220, MAGI2, NTRK1 and RAPGEF2; the complex is mainly formed at late endosomes in a neuronal growth factor (NGF)-dependent manner. Interacts (via C-terminal domain) with NEDD4 (via WW domains); this interaction leads to ubiquitination and degradation via the proteasome pathway in a cAMP-independent manner. Interacts with MAGI1 (via PDZ domain). Interacts with ADRB1 (via C-terminal PDZ motif); the interaction is direct. Interacts (via Ras-associating domain) with RAP1A (via GTP-bound active form). Interacts weakly with HRAS (via GDP- and GTP-bound forms). Interacts (via C-terminal domain) with MAGI2 (via PDZ and WW domains). Interacts with CDH1 and TJP1. Interacts with CTNNB1. In terms of processing, ubiquitinated by NEDD4, leading to proteasomal degradation. Phosphorylation by PLK2 promotes its activity.

The protein resides in the cytoplasm. The protein localises to the perinuclear region. Its subcellular location is the cell membrane. It localises to the late endosome. It is found in the cell junction. Functionally, functions as a guanine nucleotide exchange factor (GEF), which activates Rap and Ras family of small GTPases by exchanging bound GDP for free GTP in a cAMP-dependent manner. Serves as a link between cell surface receptors and Rap/Ras GTPases in intracellular signaling cascades. Also acts as an effector for Rap1 by direct association with Rap1-GTP thereby leading to the amplification of Rap1-mediated signaling. Shows weak activity on HRAS. It is controversial whether RAPGEF2 binds cAMP and cGMP or not. Its binding to ligand-activated beta-1 adrenergic receptor ADRB1 leads to the Ras activation through the G(s)-alpha signaling pathway. Involved in the cAMP-induced Ras and Erk1/2 signaling pathway that leads to sustained inhibition of long term melanogenesis by reducing dendrite extension and melanin synthesis. Also provides inhibitory signals for cell proliferation of melanoma cells and promotes their apoptosis in a cAMP-independent nanner. Regulates cAMP-induced neuritogenesis by mediating the Rap1/B-Raf/ERK signaling through a pathway that is independent on both PKA and RAPGEF3/RAPGEF4. Involved in neuron migration and in the formation of the major forebrain fiber connections forming the corpus callosum, the anterior commissure and the hippocampal commissure during brain development. Involved in neuronal growth factor (NGF)-induced sustained activation of Rap1 at late endosomes and in brain-derived neurotrophic factor (BDNF)-induced axon outgrowth of hippocampal neurons. Plays a role in the regulation of embryonic blood vessel formation and in the establishment of basal junction integrity and endothelial barrier function. May be involved in the regulation of the vascular endothelial growth factor receptor KDR and cadherin CDH5 expression at allantois endothelial cell-cell junctions. Binds to cAMP. The protein is Rap guanine nucleotide exchange factor 2 (RAPGEF2) of Bos taurus (Bovine).